We begin with the raw amino-acid sequence, 145 residues long: MYPAHLLVLLAVCISLLGASAIPPLPLNLVQFTYLIQCANKGSRASYHYADYGCYCGAGGSGTPVDELDRCCKVHDDCYGEAEKMGCYPKLTMYNYYCGTEGPYCNTKTDCQRYVCACDLQAAKCFARSPYNNKNYNIDTSKRCK.

Positions 1–21 are cleaved as a signal peptide; sequence MYPAHLLVLLAVCISLLGASA. Positions 22 to 27 are excised as a propeptide; the sequence is IPPLPL. 7 cysteine pairs are disulfide-bonded: C38-C98, C54-C144, C56-C72, C71-C125, C78-C118, C87-C111, and C105-C116. Ca(2+) is bound by residues Y55, G57, and G59. The active site involves H75. D76 is a binding site for Ca(2+). The active site involves D119.

The protein belongs to the phospholipase A2 family. Group I subfamily. D49 sub-subfamily. It depends on Ca(2+) as a cofactor. As to expression, expressed by the venom gland.

The protein localises to the secreted. The enzyme catalyses a 1,2-diacyl-sn-glycero-3-phosphocholine + H2O = a 1-acyl-sn-glycero-3-phosphocholine + a fatty acid + H(+). Functionally, PLA2 catalyzes the calcium-dependent hydrolysis of the 2-acyl groups in 3-sn-phosphoglycerides. In Laticauda semifasciata (Black-banded sea krait), this protein is Basic phospholipase A2 cPm05.